A 64-amino-acid polypeptide reads, in one-letter code: Carnocyclin-A (64 aa).

Positions M1–E4 are excised as a propeptide. The segment at residues L5–L64 is a cross-link (cyclopeptide (Leu-Leu)).

Its subcellular location is the secreted. Functionally, cyclopeptide antibiotic that inhibits the growth of Gram-positive bacteria, but has no effect on the growth of Gram-negative bacteria. This is Carnocyclin-A from Carnobacterium maltaromaticum (Carnobacterium piscicola).